Consider the following 152-residue polypeptide: Large ribosomal subunit protein bL9 (152 aa).

Belongs to the bacterial ribosomal protein bL9 family.

In terms of biological role, binds to the 23S rRNA. In Mycoplasmopsis synoviae (strain 53) (Mycoplasma synoviae), this protein is Large ribosomal subunit protein bL9.